Consider the following 501-residue polypeptide: Nucleic-acid-binding protein from transposon X-element (501 aa).

Disordered stretches follow at residues 20 to 71 (SSPQ…GNSN) and 105 to 128 (AAAK…SKPP). A CCHC-type zinc finger spans residues 285–302 (VQCHRCQQIGHTAKYCRK). Disordered regions lie at residues 353–385 (RPRS…SRGG) and 400–443 (QPMS…TDAS). Residues 407 to 422 (QQQKQKQQPYDGSPSR) are compositionally biased toward low complexity. A compositionally biased stretch (polar residues) spans 434–443 (GTLQRSTDAS).

Its subcellular location is the virion. In terms of biological role, strongly basic protein that binds directly to retroviral RNA and may be involved in its packaging and in the reverse transcription process. This chain is Nucleic-acid-binding protein from transposon X-element, found in Drosophila melanogaster (Fruit fly).